The sequence spans 267 residues: Ribosomal RNA large subunit methyltransferase E (267 aa).

The S-adenosyl-L-methionine site is built by Gly-52, Phe-54, Asp-72, Asp-90, and Asp-114. The active-site Proton acceptor is the Lys-154. Residues 212–252 show a composition bias toward low complexity; sequence EAPRAPAPPEQAAAPEEATAPATRAARQKPAPAKKPAAAKR. A disordered region spans residues 212-267; that stretch reads EAPRAPAPPEQAAAPEEATAPATRAARQKPAPAKKPAAAKRPAARKRAAKKPARRA. A compositionally biased stretch (basic residues) spans 253 to 267; sequence PAARKRAAKKPARRA.

This sequence belongs to the class I-like SAM-binding methyltransferase superfamily. RNA methyltransferase RlmE family.

It is found in the cytoplasm. It catalyses the reaction uridine(2552) in 23S rRNA + S-adenosyl-L-methionine = 2'-O-methyluridine(2552) in 23S rRNA + S-adenosyl-L-homocysteine + H(+). Functionally, specifically methylates the uridine in position 2552 of 23S rRNA at the 2'-O position of the ribose in the fully assembled 50S ribosomal subunit. The polypeptide is Ribosomal RNA large subunit methyltransferase E (Anaeromyxobacter dehalogenans (strain 2CP-C)).